The following is a 207-amino-acid chain: High frequency lysogenization protein HflD homolog (207 aa).

Belongs to the HflD family.

The protein localises to the cytoplasm. Its subcellular location is the cell inner membrane. The chain is High frequency lysogenization protein HflD homolog from Cellvibrio japonicus (strain Ueda107) (Pseudomonas fluorescens subsp. cellulosa).